Reading from the N-terminus, the 76-residue chain is Rhesus theta defensin-1/3 subunit A (76 aa).

The N-terminal stretch at methionine 1 to alanine 22 is a signal peptide. The propeptide occupies arginine 23–leucine 64. The segment at alanine 25 to histidine 45 is disordered. Arginine 65 participates in a covalent cross-link: Cyclopeptide (Arg-Cys) (interchain with C-73 in subunit A); in form RTD-3. Arginine 65 is covalently cross-linked (Cyclopeptide (Arg-Cys) (interchain with C-73 in subunit B); in form RTD-1). A disulfide bridge connects residues cysteine 68 and cysteine 73. A Cyclopeptide (Cys-Arg) (interchain with R-65 in subunit A); in form RTD-3 cross-link involves residue cysteine 73. A Cyclopeptide (Cys-Arg) (interchain with R-65 in subunit B); in form RTD-1 cross-link involves residue cysteine 73. Positions arginine 74 to leucine 76 are excised as a propeptide.

It belongs to the alpha-defensin family. Theta subfamily. RTD-1 is a cyclic heterodimer composed of subunits A and B; disulfide-linked. RTD-3 is a cyclic homodimer composed of two subunits A; disulfide-linked. Forms a cyclic peptide with subunit A (RTD-3) or with subunit B (RTD-1). An additional intersubunit disulfide bond is formed. As to expression, RTD-1 is expressed in bone marrow. Detected in promyelocytes, myelocytes and mature neutrophils and monocytes.

Its function is as follows. RTD-1 and RTD-3 have similar antimicrobial activities against the Gram-positive bacteria S.aureus 502A and L.monocytogenes, the Gram-negative bacteria S.typhimurium and E.coli ML35, and the fungi C.albicans 16820 and C.neoformans 271A. This is Rhesus theta defensin-1/3 subunit A (RTD1A) from Macaca mulatta (Rhesus macaque).